A 223-amino-acid chain; its full sequence is MRIADFDPENRPRERFIAHGPAALSSAELLAIVLRTGTRKNNILDTCNTLLSLHGLEALANMNLKELQKTSGIGPSKAMQITAIFELNKRLHYKRNTNRKIQGARDVYEYMQGRVPDETKEHLFVLHLNTKNQITKCEEVTIGTLNASLIHPREVFKAAIRESANAIILVHNHPSGDTEPSNADRQVTNLLKQASAVIQIDLLDHVIIGKTGWYSFRENNQLS.

The MPN domain occupies 100–222 (KIQGARDVYE…WYSFRENNQL (123 aa)). His171, His173, and Asp184 together coordinate Zn(2+). The JAMM motif motif lies at 171–184 (HNHPSGDTEPSNAD).

It belongs to the UPF0758 family.

The protein is UPF0758 protein Cvib_1178 of Chlorobium phaeovibrioides (strain DSM 265 / 1930) (Prosthecochloris vibrioformis (strain DSM 265)).